The primary structure comprises 456 residues: MTKVVEISPTTRLEGHSKLTLKVDDQGIVERGDWLSITPVRGIEKLAIGKTMEQVPKIASRVCGICPIAHTLASTEAMEASIGCEIPTDAKLLRTILHAANRIHSIALHNILILPDFYIPGTEKKFNLFANEQPARSVMARIVRIREIAQTIGAIAGGEAIHPSNPRIGGMYYNVSPRAKQKMADLAKEGLVLVHEQMEFMFDVIRNMQNREFVEVAGKQIPLPKKLGYHNQGVMATASMYGSSSLDDNPTWDFTRWKETRPWDWYMGEVTIDLEDPSYPIGGTTKIGTKANPQMEACTGVPTYDGQPVEVGPRARLATFKNFDEKGTFAQHIARQMEYPDCCYTILRCLDNLNTSGKVLADHIPQGDGSMGWAANEAPRGSNIHLARVKDGKVLWYDMLVPTTWNFPTCSRALTGAPWQIAEMVVRAYDPCVSCATHMIVVNEEEKIVTQKLMQW.

Ni(2+) contacts are provided by Cys63, Cys66, Cys432, and Cys435.

It belongs to the [NiFe]/[NiFeSe] hydrogenase large subunit family. In terms of assembly, pentamer of two alpha chains, two beta chains and a gamma chain. Requires Ni(2+) as cofactor. It depends on iron-sulfur cluster as a cofactor. FAD is required as a cofactor.

It localises to the cell membrane. It carries out the reaction oxidized coenzyme F420-(gamma-L-Glu)(n) + H2 + H(+) = reduced coenzyme F420-(gamma-L-Glu)(n). Functionally, reduces the physiological low-potential two-electron acceptor coenzyme F420, and the artificial one-electron acceptor methylviologen. This chain is Coenzyme F420 hydrogenase subunit alpha (frhA), found in Methanosarcina barkeri (strain Fusaro / DSM 804).